The primary structure comprises 74 residues: Antimicrobial peptide 36.4 (74 aa).

Positions 1-22 (MKVNVLLAVFLVVMVVTDHCHA) are cleaved as a signal peptide. At lysine 39 the chain carries Lysine amide. A propeptide spanning residues 44 to 74 (LQMEARFQPQNKNYRKRELDLENLFTHMPDY) is cleaved from the precursor.

It belongs to the non-disulfide-bridged peptide (NDBP) superfamily. Short antimicrobial peptide (group 4) family. In terms of tissue distribution, expressed by the venom gland.

The protein resides in the secreted. It localises to the target cell membrane. In terms of biological role, cationic host defense peptide that have antibacterial activity by breaking membranes. Is more effective on Gram-positive than on Gram-negative bacteria. This Lychas mucronatus (Chinese swimming scorpion) protein is Antimicrobial peptide 36.4.